Reading from the N-terminus, the 476-residue chain is Aspartyl/glutamyl-tRNA(Asn/Gln) amidotransferase subunit B (476 aa).

It belongs to the GatB/GatE family. GatB subfamily. Heterotrimer of A, B and C subunits.

It carries out the reaction L-glutamyl-tRNA(Gln) + L-glutamine + ATP + H2O = L-glutaminyl-tRNA(Gln) + L-glutamate + ADP + phosphate + H(+). The enzyme catalyses L-aspartyl-tRNA(Asn) + L-glutamine + ATP + H2O = L-asparaginyl-tRNA(Asn) + L-glutamate + ADP + phosphate + 2 H(+). In terms of biological role, allows the formation of correctly charged Asn-tRNA(Asn) or Gln-tRNA(Gln) through the transamidation of misacylated Asp-tRNA(Asn) or Glu-tRNA(Gln) in organisms which lack either or both of asparaginyl-tRNA or glutaminyl-tRNA synthetases. The reaction takes place in the presence of glutamine and ATP through an activated phospho-Asp-tRNA(Asn) or phospho-Glu-tRNA(Gln). The polypeptide is Aspartyl/glutamyl-tRNA(Asn/Gln) amidotransferase subunit B (Oceanobacillus iheyensis (strain DSM 14371 / CIP 107618 / JCM 11309 / KCTC 3954 / HTE831)).